Consider the following 188-residue polypeptide: Augmin complex subunit dgt4 (188 aa).

A coiled-coil region spans residues Q141–N163.

As to quaternary structure, component of the augmin complex composed of dgt2, dgt3, dgt4, dgt5, dgt6, msd1, msd5 and wac. The complex interacts directly or indirectly with microtubules and is required for centrosome-independent generation of spindle microtubules.

The protein resides in the cytoplasm. It is found in the cytoskeleton. The protein localises to the spindle. Its function is as follows. As part of the augmin complex, plays a role in centrosome-independent generation of spindle microtubules. The complex is required for mitotic spindle assembly through its involvement in localizing gamma-tubulin to spindle microtubules. The chain is Augmin complex subunit dgt4 from Drosophila melanogaster (Fruit fly).